The primary structure comprises 97 residues: Class II hydrophobin NC2 (97 aa).

The signal sequence occupies residues 1-17 (MQFTIATVLSLLTITLA). Intrachain disulfides connect Cys-31-Cys-79, Cys-40-Cys-70, Cys-41-Cys-53, and Cys-80-Cys-91. N-linked (GlcNAc...) asparagine glycosylation occurs at Asn-62.

The protein belongs to the cerato-ulmin hydrophobin family. Homotrimer. Further self-assembles to form highly ordered films at water-air interfaces through intermolecular interactions.

It localises to the secreted. It is found in the cell wall. Aerial growth, conidiation, and dispersal of filamentous fungi in the environment rely upon a capability of their secreting small amphipathic proteins called hydrophobins (HPBs) with low sequence identity. Class I can self-assemble into an outermost layer of rodlet bundles on aerial cell surfaces, conferring cellular hydrophobicity that supports fungal growth, development and dispersal; whereas Class II form highly ordered films at water-air interfaces through intermolecular interactions but contribute nothing to the rodlet structure. NC2 is a class II hydrophobin that has the potential to adsorb to the hydrophobic interface at the hydrophobic-hydrophilic interface at very high rate but the predicted self-assembly NC2 film possesses a lower flexural rigidity than other class II hydrophobins such as HFBII from Hypocrea jecorina (also known as Trichoderma reesei). This Neurospora crassa (strain ATCC 24698 / 74-OR23-1A / CBS 708.71 / DSM 1257 / FGSC 987) protein is Class II hydrophobin NC2.